Here is a 1302-residue protein sequence, read N- to C-terminus: Serine-enriched protein (1302 aa).

The 119-residue stretch at 40–158 (CDVTFLVGDT…IHTGCVTLQP (119 aa)) folds into the BTB domain. Disordered regions lie at residues 325-532 (SIDP…RSPT), 575-624 (PIPP…SVMR), 648-685 (FTRAESGSSGGPLIRQSTFSASPAASSTAAKSAVQKQM), 701-752 (YAKM…SSDE), 834-858 (FTRRSESREPIEPRISEERESDSND), 1045-1090 (FQRS…RTEN), 1102-1163 (FSRA…GEEE), and 1187-1252 (VLTQ…SASP). Positions 337–364 (RQHHRHRHHHQSLPKIRKAKSQSFRTRR) are enriched in basic residues. Polar residues-rich tracts occupy residues 378–388 (LTLNTSLTSGN), 410–430 (SPGSSSQKTPTSLSRQGTLRA), 437–449 (SGQLSISLGTQGR), and 472–487 (GLRSPNDPMTSPTVRS). The span at 589 to 623 (KSAEREREAAEAAAREKEKEKEKEAAQPQEKKSVM) shows a compositional bias: basic and acidic residues. A compositionally biased stretch (low complexity) spans 664–680 (STFSASPAASSTAAKSA). Residues 713–723 (KRDDEEKEKQK) are compositionally biased toward basic and acidic residues. Residues 736 to 748 (DLSQTNADQQVGG) show a composition bias toward polar residues. Residues 836-855 (RRSESREPIEPRISEERESD) show a composition bias toward basic and acidic residues. Composition is skewed to low complexity over residues 1047–1056 (RSGSSCGGRK) and 1107–1128 (SPLSQQTSSNYSSRDSYDSSGS). The span at 1187-1207 (VLTQQLSTGSMSTPSGYTNGT) shows a compositional bias: polar residues. A compositionally biased stretch (low complexity) spans 1226–1252 (APLSSCGFSSGSEFEPPSPRRAASASP).

This is Serine-enriched protein (gprs) from Drosophila melanogaster (Fruit fly).